The chain runs to 579 residues: DELLA protein RGA2 (579 aa).

The disordered stretch occupies residues 1–31 (MKRDLHQFQGPPDTRFPNHGTANTGSSSKDK). The DELLA motif motif lies at 45-49 (DELLA). Low complexity-rich tracts occupy residues 149-162 (SSSS…NSQS) and 174-183 (SLVTGTTVTT). The disordered stretch occupies residues 149 to 183 (SSSSSNQAGDNSQSTKRLKSCSSPDSLVTGTTVTT). Residues 205–574 (VDSQENGVRL…RPLITTSAWK (370 aa)) form the GRAS domain. A leucine repeat I (LRI) region spans residues 212 to 266 (VRLVHALMACAEAIQNNDLSIAEALVKQIGFLAVSQAGAMRKVATYFAEALARRI). The segment at 285–350 (QMHFYETCPY…GGPPVFRLTG (66 aa)) is VHIID. The VHIID signature appears at 316–320 (VHVID). Residues 364–396 (EVGCKLAQLAEAIHVEFEYRGFVANSLADLDAS) form a leucine repeat II (LRII) region. The tract at residues 408–495 (VAVNSVFELH…EVYLGKQICN (88 aa)) is PFYRE. The LXXLL motif signature appears at 416–420 (LHKLL). The SAW stretch occupies residues 498 to 574 (ACEGPDRVER…RPLITTSAWK (77 aa)).

It belongs to the GRAS family. DELLA subfamily. Post-translationally, phosphorylated. In terms of processing, ubiquitinated. Upon GA application it is ubiquitinated, leading to its subsequent degradation.

The protein resides in the nucleus. Functionally, probable transcriptional regulator that acts as a repressor of the gibberellin (GA) signaling pathway. Probably acts by participating in large multiprotein complexes that represses transcription of GA-inducible genes. Upon GA application, it is degraded by the proteasome, allowing the GA signaling pathway. The protein is DELLA protein RGA2 (RGA2) of Brassica campestris (Field mustard).